A 227-amino-acid chain; its full sequence is MKFAVIVLPGSNCDIDMFHAIKDELGEEAEYVWHTETSLDEYDGVLIPGGFSYGDYLRCGAIARFANIMPAVKKAAEEGKPVLGVCNGFQILQELGLLPGAMRRNKDLKFICRPVELIVQNNETLFTSSYGKGESITIPVAHGEGNFYCDEETLAGLQENNQIAFTYGTDINGSVADIAGVVNEKGNVLGMMPHPERAVDSLLGSADGLKLFQSIVKNWRETHVATA.

Residues F3–A225 form the Glutamine amidotransferase type-1 domain. C86 (nucleophile) is an active-site residue. Catalysis depends on residues H194 and E196.

Part of the FGAM synthase complex composed of 1 PurL, 1 PurQ and 2 PurS subunits.

It localises to the cytoplasm. The enzyme catalyses N(2)-formyl-N(1)-(5-phospho-beta-D-ribosyl)glycinamide + L-glutamine + ATP + H2O = 2-formamido-N(1)-(5-O-phospho-beta-D-ribosyl)acetamidine + L-glutamate + ADP + phosphate + H(+). It carries out the reaction L-glutamine + H2O = L-glutamate + NH4(+). Its pathway is purine metabolism; IMP biosynthesis via de novo pathway; 5-amino-1-(5-phospho-D-ribosyl)imidazole from N(2)-formyl-N(1)-(5-phospho-D-ribosyl)glycinamide: step 1/2. Functionally, part of the phosphoribosylformylglycinamidine synthase complex involved in the purines biosynthetic pathway. Catalyzes the ATP-dependent conversion of formylglycinamide ribonucleotide (FGAR) and glutamine to yield formylglycinamidine ribonucleotide (FGAM) and glutamate. The FGAM synthase complex is composed of three subunits. PurQ produces an ammonia molecule by converting glutamine to glutamate. PurL transfers the ammonia molecule to FGAR to form FGAM in an ATP-dependent manner. PurS interacts with PurQ and PurL and is thought to assist in the transfer of the ammonia molecule from PurQ to PurL. The protein is Phosphoribosylformylglycinamidine synthase subunit PurQ of Bacillus licheniformis (strain ATCC 14580 / DSM 13 / JCM 2505 / CCUG 7422 / NBRC 12200 / NCIMB 9375 / NCTC 10341 / NRRL NRS-1264 / Gibson 46).